The sequence spans 414 residues: Glucose-1-phosphate adenylyltransferase (414 aa).

Alpha-D-glucose 1-phosphate is bound by residues Y99, G164, 181–182 (EK), and S199.

This sequence belongs to the bacterial/plant glucose-1-phosphate adenylyltransferase family. As to quaternary structure, homotetramer.

The enzyme catalyses alpha-D-glucose 1-phosphate + ATP + H(+) = ADP-alpha-D-glucose + diphosphate. Its pathway is glycan biosynthesis; glycogen biosynthesis. Involved in the biosynthesis of ADP-glucose, a building block required for the elongation reactions to produce glycogen. Catalyzes the reaction between ATP and alpha-D-glucose 1-phosphate (G1P) to produce pyrophosphate and ADP-Glc. The protein is Glucose-1-phosphate adenylyltransferase of Bifidobacterium adolescentis (strain ATCC 15703 / DSM 20083 / NCTC 11814 / E194a).